The chain runs to 288 residues: Polyamine aminopropyltransferase (288 aa).

A PABS domain is found at 9–238 (ETLHDQFGQY…GIMTFAWATD (230 aa)). Gln-33 is a binding site for S-methyl-5'-thioadenosine. The spermidine site is built by His-64 and Asp-88. S-methyl-5'-thioadenosine is bound by residues Glu-108 and 140–141 (DG). Asp-158 (proton acceptor) is an active-site residue. Residue 158–161 (DCTD) coordinates spermidine. Pro-165 contacts S-methyl-5'-thioadenosine.

It belongs to the spermidine/spermine synthase family. As to quaternary structure, homodimer or homotetramer.

Its subcellular location is the cytoplasm. The enzyme catalyses S-adenosyl 3-(methylsulfanyl)propylamine + putrescine = S-methyl-5'-thioadenosine + spermidine + H(+). Its pathway is amine and polyamine biosynthesis; spermidine biosynthesis; spermidine from putrescine: step 1/1. Functionally, catalyzes the irreversible transfer of a propylamine group from the amino donor S-adenosylmethioninamine (decarboxy-AdoMet) to putrescine (1,4-diaminobutane) to yield spermidine. This chain is Polyamine aminopropyltransferase, found in Escherichia coli O81 (strain ED1a).